Here is a 396-residue protein sequence, read N- to C-terminus: Anhydro-N-acetylmuramic acid kinase (396 aa).

19-26 (GTSADGID) is a binding site for ATP.

This sequence belongs to the anhydro-N-acetylmuramic acid kinase family.

The enzyme catalyses 1,6-anhydro-N-acetyl-beta-muramate + ATP + H2O = N-acetyl-D-muramate 6-phosphate + ADP + H(+). It functions in the pathway amino-sugar metabolism; 1,6-anhydro-N-acetylmuramate degradation. Its pathway is cell wall biogenesis; peptidoglycan recycling. Functionally, catalyzes the specific phosphorylation of 1,6-anhydro-N-acetylmuramic acid (anhMurNAc) with the simultaneous cleavage of the 1,6-anhydro ring, generating MurNAc-6-P. Is required for the utilization of anhMurNAc either imported from the medium or derived from its own cell wall murein, and thus plays a role in cell wall recycling. This is Anhydro-N-acetylmuramic acid kinase from Colwellia psychrerythraea (strain 34H / ATCC BAA-681) (Vibrio psychroerythus).